The following is a 412-amino-acid chain: P-selectin glycoprotein ligand 1 (412 aa).

The first 17 residues, M1–S17, serve as a signal peptide directing secretion. A propeptide spanning residues L18–R41 is cleaved from the precursor. At L18–C320 the chain is on the extracellular side. Position 42 is a pyrrolidone carboxylic acid (Q42). 3 positions are modified to sulfotyrosine: Y46, Y48, and Y51. Positions E56–A95 are disordered. O-linked (GalNAc...) threonine glycosylation occurs at T57. N-linked (GlcNAc...) asparagine glycosylation is present at N65. The segment covering S66–T82 has biased composition (low complexity). N111 carries an N-linked (GlcNAc...) asparagine glycan. 12 consecutive repeat copies span residues Q122 to A131, Q132 to A141, Q142 to A151, Q162 to A171, Q182 to A191, Q192 to A201, Q202 to A211, Q212 to A221, Q222 to A231, Q232 to A241, Q242 to A251, and Q252 to A261. Residues Q122–A261 are 12 X 10 AA tandem repeats. Disordered stretches follow at residues Q125–L146 and L166–Q252. N302 is a glycosylation site (N-linked (GlcNAc...) asparagine). Residues L321 to L341 traverse the membrane as a helical segment. Residues A342–P412 are Cytoplasmic-facing. A disordered region spans residues E374 to P412. Basic and acidic residues predominate over residues E395–T406. The residue at position 406 (T406) is a Phosphothreonine. S409 carries the post-translational modification Phosphoserine.

As to quaternary structure, homodimer; disulfide-linked. Interaction with P-, E- and L-selectins, through their lectin/EGF domains, is required for promoting recruitment and rolling of leukocytes. These interactions require sialyl Lewis X glycan modification but there is a differing dependence for tyrosine sulfations. Sulfation on Tyr-51 of PSGL1 is most important for high affinity L-selectin/SELL binding while P-selectin/SELP requires sulfation on Tyr-48. E-selectin/SELE binds with much lower affinity and requires the sLe(x) epitope, but apparently not tyrosine sulfation. Dimerization appears not to be required for P-selectin/SELP binding. Interacts with SNX20. Interacts with MSN and SYK; mediates the activation of SYK by SELPLG. Interacts with HAVCR1. (Microbial infection) Interacts with enterovirus 71 capsid proteins. In terms of assembly, (Microbial infection) Interacts with Staphylococcus aureus proteins SSL5 and SSL11; these interactions prevent SELPLG-mediated neutrophil rolling. In terms of processing, displays complex, core-2, sialylated and fucosylated O-linked oligosaccharides, at least some of which appear to contain poly-N-acetyllactosamine with varying degrees of substitution. Mainly disialylated or neutral forms of the core-2 tetrasaccharide, Galbeta1--&gt;4GlcNAcbeta1--&gt;6(Galbeta1--&gt;3)GalNAcOH. The GlcN:GalN ratio is approximately 2:1 and the Man:Fuc ratio 3:5. Contains about 14% fucose with alpha-1,3 linkage present in two forms: One species is a disialylated, monofucosylated glycan, and the other, a monosialylated, trifucosylated glycan with a polylactosamine backbone. The fucosylated forms carry the Lewis antigen and are important for interaction with selectins and for functioning in leukocyte rolling. The modification containing the sialyl Lewis X glycan is on Thr-57. No sulfated O-glycans. Some N-glycosylation. Post-translationally, sulfation, in conjunction with the SLe(x)-containing glycan, is necessary for P- and L-selectin binding. High affinity P-selectin binding has a preferred requirement for the isomer sulfated on both Tyr-48 and Tyr-51, whereas L-selectin binding requires predominantly sulfation on Tyr-51 with sulfation on Tyr-48 playing only a minor role. These sulfations play an important role in L- and P-selectin-mediated neutrophil recruitment, and leukocyte rolling. As to expression, expressed on neutrophils, monocytes and most lymphocytes.

It is found in the membrane. Functionally, a SLe(x)-type proteoglycan, which through high affinity, calcium-dependent interactions with E-, P- and L-selectins, mediates rapid rolling of leukocytes over vascular surfaces during the initial steps in inflammation. Critical for the initial leukocyte capture. In terms of biological role, (Microbial infection) Acts as a receptor for enterovirus 71. This Homo sapiens (Human) protein is P-selectin glycoprotein ligand 1 (SELPLG).